The primary structure comprises 864 residues: Protein PAT1 homolog 1 (864 aa).

A compositionally biased stretch (polar residues) spans 427-439 (PPNSRPNGPQFSG). Disordered regions lie at residues 427–460 (PPNS…SGMP), 518–539 (WTAH…SRKD), and 551–602 (EMQK…STHN). Positions 551 to 580 (EMQKERLRDREKERQRERQERIDRGEERKP) are enriched in basic and acidic residues.

It belongs to the PAT1 family.

The protein localises to the cytoplasm. It localises to the P-body. RNA-binding protein involved in deadenylation-dependent decapping of mRNAs, leading to the degradation of mRNAs. Acts as a scaffold protein that connects deadenylation and decapping machinery. Required for the recruitment of P-body components such as cgh-1 in somatic blastomeres. May play a role in recruiting the decapping enzyme dcap-1 to cytoplasmic puncta in the cell body of the posterior touch receptor neuron, PLM. This is Protein PAT1 homolog 1 (patr-1) from Caenorhabditis briggsae.